Reading from the N-terminus, the 199-residue chain is Cytochrome c oxidase subunit 2 (199 aa).

A helical membrane pass occupies residues 1–13 (AICSLVLYLLTLM). At 14-26 (LMEKLSSNSVDAQ) the chain is on the mitochondrial matrix side. Residues 27-54 (EVELVWTILPAIVLILLALPSLQILYMM) form a helical membrane-spanning segment. Topologically, residues 55 to 199 (DEIDEPDLTL…SSLLSTSSSL (145 aa)) are mitochondrial intermembrane. Positions 128, 163, 165, 167, 171, and 174 each coordinate Cu cation. A Mg(2+)-binding site is contributed by glutamate 165.

This sequence belongs to the cytochrome c oxidase subunit 2 family. In terms of assembly, component of the cytochrome c oxidase (complex IV, CIV), a multisubunit enzyme composed of 14 subunits. The complex is composed of a catalytic core of 3 subunits MT-CO1, MT-CO2 and MT-CO3, encoded in the mitochondrial DNA, and 11 supernumerary subunits COX4I, COX5A, COX5B, COX6A, COX6B, COX6C, COX7A, COX7B, COX7C, COX8 and NDUFA4, which are encoded in the nuclear genome. The complex exists as a monomer or a dimer and forms supercomplexes (SCs) in the inner mitochondrial membrane with NADH-ubiquinone oxidoreductase (complex I, CI) and ubiquinol-cytochrome c oxidoreductase (cytochrome b-c1 complex, complex III, CIII), resulting in different assemblies (supercomplex SCI(1)III(2)IV(1) and megacomplex MCI(2)III(2)IV(2)). Found in a complex with TMEM177, COA6, COX18, COX20, SCO1 and SCO2. Interacts with TMEM177 in a COX20-dependent manner. Interacts with COX20. Interacts with COX16. Cu cation serves as cofactor.

Its subcellular location is the mitochondrion inner membrane. It catalyses the reaction 4 Fe(II)-[cytochrome c] + O2 + 8 H(+)(in) = 4 Fe(III)-[cytochrome c] + 2 H2O + 4 H(+)(out). Its function is as follows. Component of the cytochrome c oxidase, the last enzyme in the mitochondrial electron transport chain which drives oxidative phosphorylation. The respiratory chain contains 3 multisubunit complexes succinate dehydrogenase (complex II, CII), ubiquinol-cytochrome c oxidoreductase (cytochrome b-c1 complex, complex III, CIII) and cytochrome c oxidase (complex IV, CIV), that cooperate to transfer electrons derived from NADH and succinate to molecular oxygen, creating an electrochemical gradient over the inner membrane that drives transmembrane transport and the ATP synthase. Cytochrome c oxidase is the component of the respiratory chain that catalyzes the reduction of oxygen to water. Electrons originating from reduced cytochrome c in the intermembrane space (IMS) are transferred via the dinuclear copper A center (CU(A)) of subunit 2 and heme A of subunit 1 to the active site in subunit 1, a binuclear center (BNC) formed by heme A3 and copper B (CU(B)). The BNC reduces molecular oxygen to 2 water molecules using 4 electrons from cytochrome c in the IMS and 4 protons from the mitochondrial matrix. The polypeptide is Cytochrome c oxidase subunit 2 (MT-CO2) (Apteryx australis (Southern brown kiwi)).